Consider the following 166-residue polypeptide: Large ribosomal subunit protein uL10 (166 aa).

This sequence belongs to the universal ribosomal protein uL10 family. As to quaternary structure, part of the ribosomal stalk of the 50S ribosomal subunit. The N-terminus interacts with L11 and the large rRNA to form the base of the stalk. The C-terminus forms an elongated spine to which L12 dimers bind in a sequential fashion forming a multimeric L10(L12)X complex.

Its function is as follows. Forms part of the ribosomal stalk, playing a central role in the interaction of the ribosome with GTP-bound translation factors. This Ureaplasma parvum serovar 3 (strain ATCC 27815 / 27 / NCTC 11736) protein is Large ribosomal subunit protein uL10.